The chain runs to 465 residues: Trigger factor (465 aa).

The region spanning G163–A248 is the PPIase FKBP-type domain. Positions E431–K465 are disordered. Positions E443–K465 are enriched in basic and acidic residues.

This sequence belongs to the FKBP-type PPIase family. Tig subfamily.

It localises to the cytoplasm. The enzyme catalyses [protein]-peptidylproline (omega=180) = [protein]-peptidylproline (omega=0). Its function is as follows. Involved in protein export. Acts as a chaperone by maintaining the newly synthesized protein in an open conformation. Functions as a peptidyl-prolyl cis-trans isomerase. The sequence is that of Trigger factor from Mesomycoplasma hyopneumoniae (strain 232) (Mycoplasma hyopneumoniae).